The primary structure comprises 458 residues: Phenylalanine-specific permease (458 aa).

Residues 1–27 are Cytoplasmic-facing; that stretch reads MKNASTVSEDTASNQEPTLHRGLHNRH. A helical transmembrane segment spans residues 28 to 48; sequence IQLIALGGAIGTGLFLGIGPA. Residues 49–50 are Periplasmic-facing; that stretch reads IQ. The chain crosses the membrane as a helical span at residues 51 to 71; the sequence is MAGPAVLLGYGVAGIIAFLIM. Residues 72–105 lie on the Cytoplasmic side of the membrane; that stretch reads RQLGEMVVEEPVSGSFAHFAYKYWGPFAGFLSGW. Residues 106–126 form a helical membrane-spanning segment; the sequence is NYWVMFVLVGMAELTAAGIYM. At 127–132 the chain is on the periplasmic side; it reads QYWFPD. Residues 133–153 form a helical membrane-spanning segment; it reads VPTWIWAAAFFIIINAVNLVN. Residues 154-160 lie on the Cytoplasmic side of the membrane; sequence VRLYGET. The helical transmembrane segment at 161–181 threads the bilayer; it reads EFWFALIKVLAIIGMIGFGLW. The Periplasmic segment spans residues 182-196; it reads LLFSGHGGEKASIDN. The helical transmembrane segment at 197–217 threads the bilayer; sequence LWRYGGFFATGWNGLILSLAV. Residues 218 to 250 lie on the Cytoplasmic side of the membrane; it reads IMFSFGGLELIGITAAEARDPEKSIPKAVNQVV. Residues 251–271 traverse the membrane as a helical segment; it reads YRILLFYIGSLVVLLALYPWV. At 272 to 288 the chain is on the periplasmic side; sequence EVKSNSSPFVMIFHNLD. The chain crosses the membrane as a helical span at residues 289–309; that stretch reads SNVVASALNFVILVASLSVYN. The Cytoplasmic portion of the chain corresponds to 310-341; that stretch reads SGVYSNSRMLFGLSVQGNAPKFLTRVSRRGVP. A helical membrane pass occupies residues 342-362; sequence INSLMLSGAITSLVVLINYLL. The Periplasmic portion of the chain corresponds to 363-367; it reads PQKAF. The helical transmembrane segment at 368 to 388 threads the bilayer; sequence GLLMALVVATLLLNWIMICLA. Residues 389-411 are Cytoplasmic-facing; that stretch reads HLRFRAAMRRQGRETQFKALLYP. Residues 412–432 traverse the membrane as a helical segment; that stretch reads FGNYLCIAFLGMILLLMCTMD. Residues 433-434 lie on the Periplasmic side of the membrane; the sequence is DM. A helical membrane pass occupies residues 435 to 455; that stretch reads RLSAILLPVWIVFLFMAFKTL. At 456-458 the chain is on the cytoplasmic side; sequence RRK.

This sequence belongs to the amino acid-polyamine-organocation (APC) superfamily. Amino acid transporter (AAT) (TC 2.A.3.1) family.

It is found in the cell inner membrane. The catalysed reaction is L-phenylalanine(in) + H(+)(in) = L-phenylalanine(out) + H(+)(out). Permease that is involved in the active transport across the cytoplasmic membrane of phenylalanine. Can also transport tyrosine, but not tryptophan. In Escherichia coli (strain K12), this protein is Phenylalanine-specific permease.